Consider the following 705-residue polypeptide: Dolichyl-diphosphooligosaccharide--protein glycosyltransferase subunit STT3A (705 aa).

Over 1 to 17 (MTKLGFLRLSYEKQDTL) the chain is Cytoplasmic. Residues 18-38 (LKLLILSMAAVLSFSTRLFAV) traverse the membrane as a helical segment. The Lumenal portion of the chain corresponds to 39-119 (LRFESVIHEF…IDIRNVCVFL (81 aa)). A DXD motif 1 motif is present at residues 47-49 (EFD). Aspartate 49 lines the Mn(2+) pocket. A helical membrane pass occupies residues 120 to 138 (APLFSSFTTIVTYHLTKEL). Topologically, residues 139-140 (KD) are cytoplasmic. The helical transmembrane segment at 141-158 (AGAGLLAAAMIAVVPGYI) threads the bilayer. Over 159–169 (SRSVAGSYDNE) the chain is Lumenal. Positions 167 and 169 each coordinate Mn(2+). Positions 167–169 (DNE) match the DXD motif 2 motif. The chain crosses the membrane as a helical span at residues 170 to 189 (GIAIFCMLLTYYMWIKAVKT). The Cytoplasmic portion of the chain corresponds to 190 to 191 (GS). The chain crosses the membrane as a helical span at residues 192–206 (IYWAAKCALAYFYMV). At 207 to 211 (SSWGG) the chain is on the lumenal side. A helical transmembrane segment spans residues 212 to 228 (YVFLINLIPLHVLVLML). Residues 229–233 (TGRFS) lie on the Cytoplasmic side of the membrane. The chain crosses the membrane as a helical span at residues 234-259 (HRIYVAYCTVYCLGTILSMQISFVGF). Over 260 to 267 (QPVLSSEH) the chain is Lumenal. Residues 268–287 (MAAFGVFGLCQIHAFVDYLR) traverse the membrane as a helical segment. Over 288 to 300 (SKLNPQQFEVLFR) the chain is Cytoplasmic. A helical transmembrane segment spans residues 301 to 321 (SVISLVGFVLLTVGALLMLTG). The Lumenal segment spans residues 322–356 (KISPWTGRFYSLLDPSYAKNNIPIIASVSEHQPTT). Residues 348–351 (SVSE) carry the SVSE motif motif. A helical transmembrane segment spans residues 357-379 (WSSYYFDLQLLVFMFPVGLYYCF). The Cytoplasmic segment spans residues 380–385 (SNLSDA). Residues 386-402 (RIFIIMYGVTSMYFSAV) traverse the membrane as a helical segment. The Lumenal segment spans residues 403 to 406 (MVRL). Residue arginine 405 coordinates dolichyl diphosphooligosaccharide. The helical transmembrane segment at 407–428 (MLVLAPVMCILSGIGVSQVLST) threads the bilayer. The Cytoplasmic segment spans residues 429 to 453 (YMKNLDISRPDKKSKKQQDSTYPIK). A helical transmembrane segment spans residues 454-473 (NEVASGMILVMAFFLITYTF). Residues 474–705 (HSTWVTSEAY…DLDNRGLSRT (232 aa)) are Lumenal-facing. Positions 525 to 527 (WWD) are interacts with target acceptor peptide in protein substrate. The WWDYG motif signature appears at 525 to 529 (WWDYG). Tyrosine 530 is a dolichyl diphosphooligosaccharide binding site. N-linked (GlcNAc...) asparagine glycans are attached at residues asparagine 537 and asparagine 544. The N-linked (GlcNAc...) (high mannose) asparagine glycan is linked to asparagine 548. Positions 592-599 (DINKFLWM) match the DK motif motif.

Belongs to the STT3 family. As to quaternary structure, component of the oligosaccharyltransferase (OST) complex. There are 2 OST complexes, OST-A and OST-B, which contain STT3A or STT3B as catalytic subunit, respectively. OST-A and OST-B contain common core subunits RPN1, RPN2, OST48, OST4, DAD1 and TMEM258, and OST-A contains DC2/OSTC and KRTCAP2/KCP2 specific accessory subunits. OST-A complex assembly occurs through the formation of 3 subcomplexes. Subcomplex 1 contains RPN1 and TMEM258, subcomplex 2 contains the OST-A-specific subunits STT3A, DC2/OSTC, and KCP2 as well as the core subunit OST4, and subcomplex 3 contains RPN2, DAD1, and OST48. The OST-A complex can form stable complexes with the Sec61 complex or with both the Sec61 and TRAP complexes. Mg(2+) is required as a cofactor. Requires Mn(2+) as cofactor.

It is found in the endoplasmic reticulum. It localises to the endoplasmic reticulum membrane. It carries out the reaction a di-trans,poly-cis-dolichyl diphosphooligosaccharide + L-asparaginyl-[protein] = N(4)-(oligosaccharide-(1-&gt;4)-N-acetyl-beta-D-glucosaminyl-(1-&gt;4)-N-acetyl-beta-D-glucosaminyl)-L-asparaginyl-[protein] + a di-trans,poly-cis-dolichyl diphosphate + H(+). The protein operates within protein modification; protein glycosylation. Functionally, catalytic subunit of the oligosaccharyl transferase (OST) complex that catalyzes the initial transfer of a defined glycan (Glc(3)Man(9)GlcNAc(2) in eukaryotes) from the lipid carrier dolichol-pyrophosphate to an asparagine residue within an Asn-X-Ser/Thr consensus motif in nascent polypeptide chains, the first step in protein N-glycosylation. N-glycosylation occurs cotranslationally and the complex associates with the Sec61 complex at the channel-forming translocon complex that mediates protein translocation across the endoplasmic reticulum (ER). All subunits are required for a maximal enzyme activity. This subunit contains the active site and the acceptor peptide and donor lipid-linked oligosaccharide (LLO) binding pockets. STT3A is present in the majority of OST complexes and mediates cotranslational N-glycosylation of most sites on target proteins, while STT3B-containing complexes are required for efficient post-translational glycosylation and mediate glycosylation of sites that have been skipped by STT3A. STT3A-containing OST-A complex is also required to prevent hyperglycosylation of some target proteins by preventing glycosylation of facultative sites before folding of target proteins is completed. The protein is Dolichyl-diphosphooligosaccharide--protein glycosyltransferase subunit STT3A of Mus musculus (Mouse).